A 379-amino-acid chain; its full sequence is Deoxyhypusine synthase (379 aa).

Residues 104 to 108 (SNLVS), 130 to 132 (TAG), glutamate 136, and aspartate 237 each bind NAD(+). 135 to 136 (EE) contacts spermidine. Residue aspartate 242 participates in spermidine binding. Glycine 293 serves as a coordination point for NAD(+). Residue histidine 298 coordinates spermidine. 318–319 (TA) provides a ligand contact to NAD(+). Spermidine-binding positions include 324-326 (GSD) and 333-339 (EAVSWGK). Lysine 339 serves as the catalytic Nucleophile. 352-353 (DA) serves as a coordination point for NAD(+).

It belongs to the deoxyhypusine synthase family. As to quaternary structure, homotetramer. It depends on NAD(+) as a cofactor.

The enzyme catalyses [eIF5A protein]-L-lysine + spermidine = [eIF5A protein]-deoxyhypusine + propane-1,3-diamine. The protein operates within protein modification; eIF5A hypusination. Its function is as follows. Catalyzes the NAD-dependent oxidative cleavage of spermidine and the subsequent transfer of the butylamine moiety of spermidine to the epsilon-amino group of a specific lysine residue of the eIF-5A precursor protein to form the intermediate deoxyhypusine residue. Also able to produce homospermidine from putrescine. The polypeptide is Deoxyhypusine synthase (DHS1) (Nicotiana tabacum (Common tobacco)).